We begin with the raw amino-acid sequence, 190 residues long: METQMASPSLGRCSLWLLLLGLLLPSASAQALSYREAVLRAVGQLNEKSSEVNLYRLLELDPPPKDAEDQGARKPVSFRVKETVCPRMSQQPPEQCDFKENGLVKQCVGTVSLDTSNDEFDLNCNELQSVRRLRPRRPRLPRPRPRPRPRPRSLPLPRPQPRRIPRPILLPWRPPRPIPRPQPQPIPRWL.

The signal sequence occupies residues 1-29; the sequence is METQMASPSLGRCSLWLLLLGLLLPSASA. Pyrrolidone carboxylic acid is present on glutamine 30. The propeptide occupies 30–130; that stretch reads QALSYREAVL…DLNCNELQSV (101 aa). Cystine bridges form between cysteine 85/cysteine 96 and cysteine 107/cysteine 124. Over residues 133–151 the composition is skewed to basic residues; sequence LRPRRPRLPRPRPRPRPRP. The interval 133 to 190 is disordered; sequence LRPRRPRLPRPRPRPRPRPRSLPLPRPQPRRIPRPILLPWRPPRPIPRPQPQPIPRWL. Pro residues predominate over residues 172 to 190; the sequence is WRPPRPIPRPQPQPIPRWL.

This sequence belongs to the cathelicidin family.

The protein resides in the secreted. In terms of biological role, exerts, in vitro, a potent antimicrobial activity. Probably due to an impairment of the function of the respiratory chain and of energy-dependent activities in the inner membrane of susceptible microorganisms. In Ovis aries (Sheep), this protein is Cathelicidin-3 (CATHL3).